Consider the following 388-residue polypeptide: Dual-specificity RNA methyltransferase RlmN (388 aa).

Residue glutamate 109 is the Proton acceptor of the active site. The Radical SAM core domain occupies glutamate 115–aspartate 354. A disulfide bridge links cysteine 122 with cysteine 359. [4Fe-4S] cluster is bound by residues cysteine 129, cysteine 133, and cysteine 136. Residues glycine 183–glutamate 184, serine 215, serine 237–histidine 239, and asparagine 316 contribute to the S-adenosyl-L-methionine site. Residue cysteine 359 is the S-methylcysteine intermediate of the active site.

This sequence belongs to the radical SAM superfamily. RlmN family. [4Fe-4S] cluster is required as a cofactor.

The protein localises to the cytoplasm. The enzyme catalyses adenosine(2503) in 23S rRNA + 2 reduced [2Fe-2S]-[ferredoxin] + 2 S-adenosyl-L-methionine = 2-methyladenosine(2503) in 23S rRNA + 5'-deoxyadenosine + L-methionine + 2 oxidized [2Fe-2S]-[ferredoxin] + S-adenosyl-L-homocysteine. It catalyses the reaction adenosine(37) in tRNA + 2 reduced [2Fe-2S]-[ferredoxin] + 2 S-adenosyl-L-methionine = 2-methyladenosine(37) in tRNA + 5'-deoxyadenosine + L-methionine + 2 oxidized [2Fe-2S]-[ferredoxin] + S-adenosyl-L-homocysteine. Specifically methylates position 2 of adenine 2503 in 23S rRNA and position 2 of adenine 37 in tRNAs. m2A2503 modification seems to play a crucial role in the proofreading step occurring at the peptidyl transferase center and thus would serve to optimize ribosomal fidelity. The sequence is that of Dual-specificity RNA methyltransferase RlmN from Klebsiella pneumoniae subsp. pneumoniae (strain ATCC 700721 / MGH 78578).